The following is a 433-amino-acid chain: Poly(A) ribonuclease POP2 (433 aa).

M1 bears the N-acetylmethionine mark. The disordered stretch occupies residues 78-98; it reads LLTQQQQQQQQQQQPFNIGTP. The segment covering 81–91 has biased composition (low complexity); sequence QQQQQQQQQQQ. A Phosphothreonine; by YAK1 modification is found at T97. The a divalent metal cation site is built by S188, E190, D310, and Q394.

This sequence belongs to the CAF1 family. As to quaternary structure, subunit of the 1.0 MDa CCR4-NOT core complex that contains CCR4, CAF1, NOT1, NOT2, NOT3, NOT4, NOT5, CAF40 and CAF130. In the complex interacts with NOT1. The core complex probably is part of a less characterized 1.9 MDa CCR4-NOT complex. The cofactor is Mg(2+).

It localises to the cytoplasm. Its subcellular location is the nucleus. It carries out the reaction Exonucleolytic cleavage of poly(A) to 5'-AMP.. Its function is as follows. Acts as a probably catalytic component of the CCR4-NOT core complex, which in the nucleus seems to be a general transcription factor, and in the cytoplasm the major mRNA deadenylase involved in mRNA turnover. In vitro, POP2 has 3'-exoribonuclease activity with a preference for poly(A) RNAs, but also degrades poly(U) and poly(C) RNAs. Is part of a glucose-sensing system involved in growth control in response to glucose availability. In Saccharomyces cerevisiae (strain ATCC 204508 / S288c) (Baker's yeast), this protein is Poly(A) ribonuclease POP2 (POP2).